Here is a 440-residue protein sequence, read N- to C-terminus: Protein scalloped (440 aa).

Positions 32-65 (TEQQAVGPGTIPSPWTPVNAGPPGALGSADTNGS) are disordered. The TEA DNA-binding region spans 86-162 (SADAEGVWSP…QVLARRKLRE (77 aa)).

As to quaternary structure, the C-terminus of sd interacts with the C-terminal serine-rich protein domain of vg, to form a complex which acts as a selector for wing development. Interacts (via C-terminus) with yki (via N-terminus) and this interaction enhances its transcriptional activity. Subset of neuroblasts in the central nervous system and in the peripheral sense organs of the embryo. Expressed in the developing wing primordia initially along the D/V wing boundary, and by the late third larval instar, maximal expression is seen in cells at the D/V wing disk boundary. Less expression in cells located farther from this boundary. Also expressed in wing progenitor cells.

The protein localises to the nucleus. In terms of biological role, transcription factor which plays a key role in the Hippo/SWH (Sav/Wts/Hpo) signaling pathway, a signaling pathway that plays a pivotal role in organ size control and tumor suppression by restricting proliferation and promoting apoptosis. The core of this pathway is composed of a kinase cascade wherein Hippo (Hpo), in complex with its regulatory protein Salvador (Sav), phosphorylates and activates Warts (Wts) in complex with its regulatory protein Mats, which in turn phosphorylates and inactivates the Yorkie (Yki) oncoprotein. The Hippo/SWH signaling pathway inhibits the activity of the transcriptional complex formed by Scalloped (sd) and Yki and the target genes of this pathway include cyclin-E (cycE), diap1 and bantam. Sd promotes nuclear localization of Yki. Involved in the regulation of cell-specific gene expression during development, particularly in the differentiation of the nervous system. When in combination with vestigial (vg) it acts as a transcriptional activation complex that regulates gene expression in the wing. Binding to vg switches the DNA target selectivity of sd. Required autonomously for cell proliferation and viability within the wing blade. Required for proper sensory organ precursor (SOP) differentiation at the wing margin; required for correct expression of sens. This is Protein scalloped (sd) from Drosophila melanogaster (Fruit fly).